The primary structure comprises 279 residues: Presqualene diphosphate synthase (279 aa).

The protein belongs to the phytoene/squalene synthase family. HpnD subfamily.

The enzyme catalyses 2 (2E,6E)-farnesyl diphosphate = presqualene diphosphate + diphosphate. It functions in the pathway secondary metabolite biosynthesis; hopanoid biosynthesis. Functionally, involved in the biosynthesis of the hopanoid precursor squalene (SQ) from farnesyl diphosphate (FPP). Catalyzes the first step, the formation of presqualene diphosphate (PSPP) from two molecules of FPP. This is Presqualene diphosphate synthase from Rhodopseudomonas palustris (strain ATCC BAA-98 / CGA009).